The primary structure comprises 190 residues: Bifunctional protein PyrR (190 aa).

Positions 112 to 124 (VILVDDVLYSGRS) match the PRPP-binding motif.

It belongs to the purine/pyrimidine phosphoribosyltransferase family. PyrR subfamily.

It carries out the reaction UMP + diphosphate = 5-phospho-alpha-D-ribose 1-diphosphate + uracil. Regulates the transcription of the pyrimidine nucleotide (pyr) operon in response to exogenous pyrimidines. Its function is as follows. Also displays a weak uracil phosphoribosyltransferase activity which is not physiologically significant. In Mycolicibacterium paratuberculosis (strain ATCC BAA-968 / K-10) (Mycobacterium paratuberculosis), this protein is Bifunctional protein PyrR.